Reading from the N-terminus, the 1119-residue chain is Multiple epidermal growth factor-like domains protein 10 (1119 aa).

An N-terminal signal peptide occupies residues 1 to 22; sequence MMSSCGPLLLAVSCCLVALTSS. At 23–851 the chain is on the extracellular side; the sequence is LNLDDPNVCS…ALPMDSYQIG (829 aa). Residues 27-104 enclose the EMI domain; it reads DPNVCSHWES…FYESGDICVP (78 aa). Disulfide bonds link Cys-31–Cys-92, Cys-57–Cys-66, Cys-91–Cys-102, Cys-102–Cys-115, Cys-106–Cys-121, Cys-123–Cys-132, Cys-145–Cys-157, Cys-151–Cys-164, Cys-166–Cys-175, Cys-188–Cys-200, Cys-194–Cys-207, Cys-209–Cys-218, Cys-231–Cys-243, Cys-237–Cys-250, and Cys-252–Cys-260. EGF-like domains follow at residues 98-133, 141-176, 184-219, and 227-261; these read SGDI…ADCS, WGPH…WRCE, YGNN…AFCE, and HGQQ…MVCG. Asn-197 is a glycosylation site (N-linked (GlcNAc...) asparagine). N-linked (GlcNAc...) asparagine glycosylation is present at Asn-272. 2 EGF-like domains span residues 274 to 304 and 312 to 347; these read SQEC…ERCQ and YGIG…ESCE. 6 disulfides stabilise this stretch: Cys-277/Cys-285, Cys-279/Cys-292, Cys-294/Cys-303, Cys-316/Cys-328, Cys-322/Cys-335, and Cys-337/Cys-346. N-linked (GlcNAc...) asparagine glycans are attached at residues Asn-369 and Asn-393. 9 consecutive EGF-like domains span residues 401–436, 444–479, 487–522, 573–608, 616–653, 666–696, 709–739, 747–782, and 795–825; these read YGEA…SDCA, YGIN…VDCS, WGLG…DRCD, WGPN…TTCQ, FGHR…ALCN, GGSC…SDCS, IHTC…LYCT, YGKD…RHCE, and RQVC…TRCD. 3 disulfides stabilise this stretch: Cys-405–Cys-417, Cys-411–Cys-424, and Cys-426–Cys-435. The N-linked (GlcNAc...) asparagine glycan is linked to Asn-447. 6 disulfide bridges follow: Cys-448/Cys-460, Cys-454/Cys-467, Cys-469/Cys-478, Cys-491/Cys-503, Cys-497/Cys-510, and Cys-512/Cys-521. N-linked (GlcNAc...) asparagine glycosylation is present at Asn-492. Residue Asn-576 is glycosylated (N-linked (GlcNAc...) asparagine). 18 cysteine pairs are disulfide-bonded: Cys-577–Cys-589, Cys-583–Cys-596, Cys-598–Cys-607, Cys-620–Cys-634, Cys-624–Cys-641, Cys-643–Cys-652, Cys-669–Cys-677, Cys-671–Cys-684, Cys-686–Cys-695, Cys-712–Cys-720, Cys-714–Cys-727, Cys-729–Cys-738, Cys-751–Cys-763, Cys-757–Cys-770, Cys-772–Cys-781, Cys-798–Cys-806, Cys-800–Cys-813, and Cys-815–Cys-824. Asn-674 carries an N-linked (GlcNAc...) asparagine glycan. N-linked (GlcNAc...) asparagine glycosylation occurs at Asn-803. A helical transmembrane segment spans residues 852-872; that stretch reads AITGIIILVLLVLILLLLFII. Topologically, residues 873 to 1119 are cytoplasmic; sequence YRKKQKGKES…SSPSPTEDSK (247 aa).

Belongs to the MEGF family.

It localises to the cell membrane. Its function is as follows. Membrane receptor involved in phagocytosis by macrophages and astrocytes of apoptotic cells. Essential factor in the regulation of muscle development including myogenesis. Likely plays a key role in muscle cell proliferation, adhesion and motility. May control the balance between skeletal muscle satellite cells proliferation and differentiation through regulation of the notch signaling pathway. This is Multiple epidermal growth factor-like domains protein 10 from Danio rerio (Zebrafish).